Reading from the N-terminus, the 804-residue chain is Ribonucleoside-diphosphate reductase large subunit-like protein (804 aa).

Belongs to the ribonucleoside diphosphate reductase large chain family.

Its subcellular location is the virion. The protein resides in the host cytoplasm. Functionally, does not possess a ribonucleotide reductase activity. Betaherpesviruses probably use another strategy to expand the dNTP pool in a quiescent host cell. This chain is Ribonucleoside-diphosphate reductase large subunit-like protein, found in Homo sapiens (Human).